The following is a 208-amino-acid chain: Small ribosomal subunit protein uS4 (208 aa).

The region spanning 98 to 159 (RRLDNVVYRL…KSRKIVSIND (62 aa)) is the S4 RNA-binding domain.

Belongs to the universal ribosomal protein uS4 family. Part of the 30S ribosomal subunit. Contacts protein S5. The interaction surface between S4 and S5 is involved in control of translational fidelity.

Its function is as follows. One of the primary rRNA binding proteins, it binds directly to 16S rRNA where it nucleates assembly of the body of the 30S subunit. With S5 and S12 plays an important role in translational accuracy. The protein is Small ribosomal subunit protein uS4 of Pelobacter propionicus (strain DSM 2379 / NBRC 103807 / OttBd1).